The sequence spans 295 residues: Zinc finger C2H2 protein ECU08_0560 (295 aa).

2 consecutive C2H2-type zinc fingers follow at residues 219–243 (FVCT…NLMH) and 249–273 (HKCR…YKVH).

The chain is Zinc finger C2H2 protein ECU08_0560 from Encephalitozoon cuniculi (strain GB-M1) (Microsporidian parasite).